The chain runs to 202 residues: Putative 3-methyladenine DNA glycosylase (202 aa).

This sequence belongs to the DNA glycosylase MPG family.

This is Putative 3-methyladenine DNA glycosylase from Clostridium botulinum (strain Alaska E43 / Type E3).